Reading from the N-terminus, the 533-residue chain is Capsid protein VP1 (533 aa).

The interval T333–Q353 is disordered.

The protein belongs to the microviridae F protein family.

Its subcellular location is the virion. It is found in the host cytoplasm. Functionally, assembles to form an icosahedral capsid with a T=1 symmetry. This chain is Capsid protein VP1, found in Bdellovibrio bacteriovorus (Bacteriophage phiMH2K).